A 227-amino-acid polypeptide reads, in one-letter code: General transcription factor 3C polypeptide 6 (227 aa).

The disordered stretch occupies residues Asp157 to Ser227. A compositionally biased stretch (basic and acidic residues) spans Glu186–Val195. Positions Glu203–Ser227 are enriched in polar residues.

It belongs to the TFIIIC subunit 6 family. As to quaternary structure, part of the TFIIIC subcomplex TFIIIC2, consisting of six subunits, GTF3C1, GTF3C2, GTF3C3, GTF3C4, GTF3C5 and GTF3C6. Interacts with GTF3C4 and GTF3C5.

Its subcellular location is the nucleus. In terms of biological role, involved in RNA polymerase III-mediated transcription. Integral, tightly associated component of the DNA-binding TFIIIC2 subcomplex that directly binds tRNA and virus-associated RNA promoters. The chain is General transcription factor 3C polypeptide 6 from Mus musculus (Mouse).